We begin with the raw amino-acid sequence, 348 residues long: Type IV methyl-directed restriction enzyme EcoKMcrBC (348 aa).

Functionally, modifies the specificity of McrB restriction by expanding the range of modified sequences restricted. Does not bind to DNA. The chain is Type IV methyl-directed restriction enzyme EcoKMcrBC (mcrC) from Escherichia coli (strain K12).